The following is a 374-amino-acid chain: Resuscitation-promoting factor Rpf2 (374 aa).

Residues 1–40 (MAPHQKSRINRINSTRSVPLRLATGGVLATLLIGGVTAAA) form the signal peptide. The 81-residue stretch at 210-290 (IDRVDNTEIT…PATISRGTKT (81 aa)) folds into the G5 domain. A disordered region spans residues 228–252 (PTYVDDPEAPAGDETVVEEGAPGTK).

Belongs to the transglycosylase family. Rpf subfamily. Glycosylated; by Pmt, by at least mannose and galactose. Other unidentified sugars may also be present. Post-translationally, may be subject to proteolytic cleavage as multiple shorter forms are detected in gels. In terms of processing, at least 3 non-glycosylated protein isoforms of 35, 40 and 42 kDa are seen in gels.

It is found in the secreted. Its subcellular location is the cell surface. Its function is as follows. Factor that stimulates resuscitation of dormant cells. Has peptidoglycan (PG) hydrolytic activity. Active in the pM concentration range. Has little to no effect on actively-growing cells. PG fragments could either directly activate the resuscitation pathway of dormant bacteria or serve as a substrate for endogenous Rpf, resulting in low molecular weight products with resuscitation activity. The sequence is that of Resuscitation-promoting factor Rpf2 (rpf2) from Corynebacterium glutamicum (strain ATCC 13032 / DSM 20300 / JCM 1318 / BCRC 11384 / CCUG 27702 / LMG 3730 / NBRC 12168 / NCIMB 10025 / NRRL B-2784 / 534).